A 79-amino-acid chain; its full sequence is Submaxillary gland androgen-regulated protein 3B (79 aa).

The N-terminal stretch at 1 to 22 is a signal peptide; that stretch reads MKSLTWILGLWALAACFTPGES. The tract at residues 19–79 is disordered; the sequence is PGESQRGPRG…GIFPPPPPQP (61 aa). Q23 carries the pyrrolidone carboxylic acid modification. The segment covering 28 to 79 has biased composition (pro residues); it reads GPYPPGPLAPPQPFGPGFVPPPPPPPYGPGRIPPPPPAPYGPGIFPPPPPQP.

This sequence belongs to the PROL1/PROL3 family. Post-translationally, P-A and D1A are probably degradation products of P-B. As to expression, secreted into saliva by submaxillary gland. Not expressed in heart, brain, lung, liver, skeletal muscle, Kidney, pancreas or placenta.

It is found in the secreted. The polypeptide is Submaxillary gland androgen-regulated protein 3B (SMR3B) (Homo sapiens (Human)).